We begin with the raw amino-acid sequence, 347 residues long: Spermidine/putrescine import ATP-binding protein PotA (347 aa).

An ABC transporter domain is found at 6 to 238 (LEIRNLSHYY…PKTKFVADFI (233 aa)). Residue 40-47 (GPSGCGKT) participates in ATP binding.

It belongs to the ABC transporter superfamily. Spermidine/putrescine importer (TC 3.A.1.11.1) family. The complex is composed of two ATP-binding proteins (PotA), two transmembrane proteins (PotB and PotC) and a solute-binding protein (PotD).

It is found in the cell inner membrane. It carries out the reaction ATP + H2O + polyamine-[polyamine-binding protein]Side 1 = ADP + phosphate + polyamineSide 2 + [polyamine-binding protein]Side 1.. Part of the ABC transporter complex PotABCD involved in spermidine/putrescine import. Responsible for energy coupling to the transport system. The protein is Spermidine/putrescine import ATP-binding protein PotA of Borrelia garinii subsp. bavariensis (strain ATCC BAA-2496 / DSM 23469 / PBi) (Borreliella bavariensis).